Reading from the N-terminus, the 122-residue chain is Small ribosomal subunit protein uS13 (122 aa).

The segment at 95–122 is disordered; sequence GLPVRGQKTKTNARTRKGPKRTVANKKK.

This sequence belongs to the universal ribosomal protein uS13 family. As to quaternary structure, part of the 30S ribosomal subunit. Forms a loose heterodimer with protein S19. Forms two bridges to the 50S subunit in the 70S ribosome.

Functionally, located at the top of the head of the 30S subunit, it contacts several helices of the 16S rRNA. In the 70S ribosome it contacts the 23S rRNA (bridge B1a) and protein L5 of the 50S subunit (bridge B1b), connecting the 2 subunits; these bridges are implicated in subunit movement. Contacts the tRNAs in the A and P-sites. This is Small ribosomal subunit protein uS13 from Agathobacter rectalis (strain ATCC 33656 / DSM 3377 / JCM 17463 / KCTC 5835 / VPI 0990) (Eubacterium rectale).